Reading from the N-terminus, the 589-residue chain is Vesicular glutamate transporter 3 (589 aa).

The Cytoplasmic portion of the chain corresponds to Met1–Tyr76. Residues Thr40 to Asn49 show a composition bias toward acidic residues. The segment at Thr40–Ser61 is disordered. A helical transmembrane segment spans residues Ile77–Gly97. At Val98–Gly130 the chain is on the vesicular side. An N-linked (GlcNAc...) asparagine glycan is attached at Asn106. Residues Leu131–Ser151 traverse the membrane as a helical segment. Residues Asn152–Lys153 lie on the Cytoplasmic side of the membrane. Residues Phe154–Ile174 form a helical membrane-spanning segment. The Vesicular portion of the chain corresponds to Pro175–Tyr182. The chain crosses the membrane as a helical span at residues Gly183 to Cys203. The Cytoplasmic portion of the chain corresponds to His204 to Thr221. Residues Thr222–Val242 form a helical membrane-spanning segment. Residues Gln243 to Ser249 lie on the Vesicular side of the membrane. Residues Val250–Tyr270 traverse the membrane as a helical segment. Over Glu271–Leu314 the chain is Cytoplasmic. Residues Pro315–Ile335 traverse the membrane as a helical segment. At Ser336–Gly353 the chain is on the vesicular side. The helical transmembrane segment at Leu354–Ala374 threads the bilayer. Topologically, residues Asp375–Lys390 are cytoplasmic. A helical transmembrane segment spans residues Ile391–His411. The Vesicular portion of the chain corresponds to Thr412 to Lys413. The chain crosses the membrane as a helical span at residues Gly414–Phe434. Over Asn435–Ser447 the chain is Cytoplasmic. The chain crosses the membrane as a helical span at residues Ile448–Val468. Residues Gly469–Gln481 lie on the Vesicular side of the membrane. A helical membrane pass occupies residues Asn482–Ala502. The Cytoplasmic segment spans residues Ser503–Ser586. Residues Lys559–Ser589 are disordered. Positions Asn580–Ser589 are enriched in basic and acidic residues.

The protein belongs to the major facilitator superfamily. Sodium/anion cotransporter family. VGLUT subfamily. Expressed in amygdala, cerebellum, hippocampus, medulla, spinal cord and thalamus.

It localises to the cytoplasmic vesicle. Its subcellular location is the secretory vesicle. The protein resides in the synaptic vesicle membrane. It is found in the cell membrane. The protein localises to the synapse. It localises to the synaptosome. It catalyses the reaction L-glutamate(out) = L-glutamate(in). The enzyme catalyses 3 Na(+)(out) + phosphate(out) = 3 Na(+)(in) + phosphate(in). It carries out the reaction chloride(in) = chloride(out). Its activity is regulated as follows. The L-glutamate uniporter activity exhibits a biphasic dependence on chloride concentration. Chloride channel activity is allosterically activated by lumenal H(+) and Cl(-) leading to synaptic vesicles acidification. The glutamate transport activity is allosterically activated by lumenal H(+) and Cl(-), preventing non-vesicular L-glutamate release. In terms of biological role, multifunctional transporter that transports L-glutamate as well as multiple ions such as chloride, sodium and phosphate. At the synaptic vesicle membrane, mainly functions as an uniporter that mediates the uptake of L-glutamate into synaptic vesicles at presynaptic nerve terminals of excitatory neural cells. The L-glutamate uniporter activity is electrogenic and is driven by the proton electrochemical gradient, mainly by the electrical gradient established by the vacuolar H(+)-ATPase across the synaptic vesicle membrane. In addition, functions as a chloride channel that allows a chloride permeation through the synaptic vesicle membrane that affects the proton electrochemical gradient and promotes synaptic vesicles acidification. At the plasma membrane, following exocytosis, functions as a symporter of Na(+) and phosphate from the extracellular space to the cytoplasm allowing synaptic phosphate homeostasis regulation. The symporter activity is electrogenic. Moreover, operates synergistically with SLC18A3/VACHT under a constant H(+) gradient, thereby allowing striatal vesicular acetylcholine uptake. This is Vesicular glutamate transporter 3 from Homo sapiens (Human).